Reading from the N-terminus, the 150-residue chain is Group IIC secretory phospholipase A2 (150 aa).

Positions 1–20 (MKGIAVFLVFIFCWTTSTLS) are cleaved as a signal peptide. 8 disulfides stabilise this stretch: C46–C143, C48–C64, C63–C121, C69–C150, C70–C114, C79–C107, C97–C112, and C99–C105. Residues Y47, G49, and G51 each contribute to the Ca(2+) site. The active site involves H67. Ca(2+) is bound at residue D68. Residue N92 is glycosylated (N-linked (GlcNAc...) asparagine). Residue D115 is part of the active site.

It belongs to the phospholipase A2 family. Requires Ca(2+) as cofactor.

Its subcellular location is the secreted. The enzyme catalyses a 1,2-diacyl-sn-glycero-3-phosphocholine + H2O = a 1-acyl-sn-glycero-3-phosphocholine + a fatty acid + H(+). In terms of biological role, PA2 catalyzes the calcium-dependent hydrolysis of the 2-acyl groups in 3-sn-phosphoglycerides. The chain is Group IIC secretory phospholipase A2 (Pla2g2c) from Rattus norvegicus (Rat).